A 496-amino-acid polypeptide reads, in one-letter code: Probable glycine betaine transporter (496 aa).

Helical transmembrane passes span 11–31 (TVLY…VFLP), 49–69 (FGWL…GIAI), 89–109 (FQWF…FWSV), 136–156 (VVFF…GLAL), 188–208 (AIDI…LGLG), 219–239 (IWGI…ITVI), 260–280 (VWLS…VFIL), 306–326 (WVGG…PFVG), 341–361 (FVFA…AIYG), 396–416 (LYAI…VGAA), 441–461 (FWGI…GTAA), and 468–488 (ASIA…YSIL).

Belongs to the BCCT transporter (TC 2.A.15) family.

It is found in the cell membrane. Its function is as follows. Probably acts in the uptake of glycine betaine. May function in the pathway that allows anaerobic methylotrophic growth of D.hafniense using glycine betaine. This Desulfitobacterium hafniense (strain Y51) protein is Probable glycine betaine transporter.